Reading from the N-terminus, the 115-residue chain is Holo-[acyl-carrier-protein] synthase (115 aa).

Asp-6 and Glu-51 together coordinate Mg(2+).

This sequence belongs to the P-Pant transferase superfamily. AcpS family. The cofactor is Mg(2+).

It localises to the cytoplasm. The catalysed reaction is apo-[ACP] + CoA = holo-[ACP] + adenosine 3',5'-bisphosphate + H(+). Its function is as follows. Transfers the 4'-phosphopantetheine moiety from coenzyme A to a Ser of acyl-carrier-protein. This is Holo-[acyl-carrier-protein] synthase from Campylobacter jejuni subsp. jejuni serotype O:23/36 (strain 81-176).